We begin with the raw amino-acid sequence, 178 residues long: Ribosome maturation factor RimM (178 aa).

Residues 99-178 (EGDYYWHDLI…TIEVDWDAGF (80 aa)) enclose the PRC barrel domain.

It belongs to the RimM family. Binds ribosomal protein uS19.

It is found in the cytoplasm. An accessory protein needed during the final step in the assembly of 30S ribosomal subunit, possibly for assembly of the head region. Essential for efficient processing of 16S rRNA. May be needed both before and after RbfA during the maturation of 16S rRNA. It has affinity for free ribosomal 30S subunits but not for 70S ribosomes. This Haemophilus influenzae (strain ATCC 51907 / DSM 11121 / KW20 / Rd) protein is Ribosome maturation factor RimM.